A 359-amino-acid chain; its full sequence is Tropomodulin-1 (359 aa).

The interval 36–61 (ELDPDNALLPAGLRQKDQTTKAPTGP) is disordered. Residues 39–138 (PDNALLPAGL…CDIAAILGMH (100 aa)) form a tropomyosin-binding region.

The protein belongs to the tropomodulin family. In terms of assembly, binds to the N-terminus of tropomyosin and to actin. Interacts with FLII. In terms of tissue distribution, highly expressed in the erythrocyte, heart and skeletal muscle.

It is found in the cytoplasm. Its subcellular location is the cytoskeleton. Functionally, blocks the elongation and depolymerization of the actin filaments at the pointed end. The Tmod/TM complex contributes to the formation of the short actin protofilament, which in turn defines the geometry of the membrane skeleton. The sequence is that of Tropomodulin-1 (Tmod1) from Mus musculus (Mouse).